Consider the following 464-residue polypeptide: RYamide receptor (464 aa).

Residues 1 to 105 (MEHHNSHLLP…EDMWSSAYFK (105 aa)) are Extracellular-facing. N-linked (GlcNAc...) asparagine glycans are attached at residues N49, N79, and N85. The helical transmembrane segment at 106–126 (IIVYMLYIPIFIFALIGNGTV) threads the bilayer. Residues 127 to 148 (CYIVYSTPRMRTVTNYFIASLA) lie on the Cytoplasmic side of the membrane. The helical transmembrane segment at 149–169 (IGDILMSFFCVPSSFISLFIL) threads the bilayer. At 170–189 (NYWPFGLALCHFVNYSQAVS) the chain is on the extracellular side. N183 is a glycosylation site (N-linked (GlcNAc...) asparagine). The helical transmembrane segment at 190–210 (VLVSAYTLVAISIDRYIAIMW) threads the bilayer. At 211–221 (PLKPRITKRYA) the chain is on the cytoplasmic side. Residues 222-242 (TFIIAGVWFIALATALPIPIV) traverse the membrane as a helical segment. Residues 243-274 (SGLDIPMSPWHTKCEKYICREMWPSRTQEYYY) are Extracellular-facing. A helical membrane pass occupies residues 275–295 (TLSLFALQFVVPLGVLIFTYA). Topologically, residues 296–329 (RITIRVWAKRPPGEAETNRDQRMARSKRKMVKMM) are cytoplasmic. The helical transmembrane segment at 330–350 (LTVVIVFTCCWLPFNILQLLL) threads the bilayer. The Extracellular portion of the chain corresponds to 351–363 (NDEEFAHWDPLPY). Residues 364-384 (VWFAFHWLAMSHCCYNPIIYC) form a helical membrane-spanning segment. Over 385–464 (YMNARFRSGF…LSCGETSPLR (80 aa)) the chain is Cytoplasmic.

The protein belongs to the G-protein coupled receptor 1 family.

It is found in the cell membrane. Receptor for the neuropeptides RYamide-1 and RYamide-2. The activity of this receptor is mediated by G proteins which activate a phosphatidyl-inositol-calcium second messenger system. RYamide signaling may suppress feeding behavior. In Drosophila melanogaster (Fruit fly), this protein is RYamide receptor.